Here is a 365-residue protein sequence, read N- to C-terminus: Putative glycosyltransferase C06E1.7 (365 aa).

The protein belongs to the glycosyltransferase 11 family.

The polypeptide is Putative glycosyltransferase C06E1.7 (Caenorhabditis elegans).